Reading from the N-terminus, the 637-residue chain is Serine protease Hayan (637 aa).

The first 26 residues, M1–G26, serve as a signal peptide directing secretion. Residues P31–C79 form the Clip domain. 3 disulfides stabilise this stretch: C32–C78, C42–C68, and C48–C79. Disordered stretches follow at residues F95–N137, K152–M178, Q216–N260, and L286–R365. A compositionally biased stretch (basic and acidic residues) spans E125–E136. Over residues P234 to R244 the composition is skewed to polar residues. Over residues P245–N260 the composition is skewed to low complexity. The segment covering E306–Q320 has biased composition (basic and acidic residues). Polar residues predominate over residues P321–L332. 4 disulfide bridges follow: C371-C497, C414-C430, C543-C567, and C578-C609. Residues I385 to W632 form the Peptidase S1 domain. Catalysis depends on charge relay system residues H429 and D477. S582 acts as the Charge relay system in catalysis.

Belongs to the peptidase S1 family. CLIP subfamily.

Its subcellular location is the secreted. Serine protease which, by converting prophenoloxidase 1 (PPO1) into its active form, plays an essential role in the melanization immune response to physical or septic wounding. May function in diverse PPO1-activating cascades that are negatively controlled by different serpin proteins; Spn27A and Spn28D in the hemolymph, and Spn28D and Spn77BA in the trachea. Also required in the systematic wound response by mediating the redox-dependent activation of the JNK cytoprotective cascade in neuronal tissues after integument wounding. The protein is Serine protease Hayan of Drosophila melanogaster (Fruit fly).